A 303-amino-acid polypeptide reads, in one-letter code: Ornithine carbamoyltransferase (303 aa).

Carbamoyl phosphate contacts are provided by residues 53–56 (STRT), glutamine 80, arginine 104, and 131–134 (HPCQ). L-ornithine is bound by residues asparagine 162, aspartate 222, and 226 to 227 (SM). Carbamoyl phosphate-binding positions include 261–262 (CL) and arginine 289.

Belongs to the aspartate/ornithine carbamoyltransferase superfamily. OTCase family.

It is found in the cytoplasm. The enzyme catalyses carbamoyl phosphate + L-ornithine = L-citrulline + phosphate + H(+). Its pathway is amino-acid biosynthesis; L-arginine biosynthesis; L-arginine from L-ornithine and carbamoyl phosphate: step 1/3. Reversibly catalyzes the transfer of the carbamoyl group from carbamoyl phosphate (CP) to the N(epsilon) atom of ornithine (ORN) to produce L-citrulline. This is Ornithine carbamoyltransferase from Mesorhizobium japonicum (strain LMG 29417 / CECT 9101 / MAFF 303099) (Mesorhizobium loti (strain MAFF 303099)).